Consider the following 318-residue polypeptide: Tyrosine recombinase XerC (318 aa).

One can recognise a Core-binding (CB) domain in the interval 17–108; it reads PEVMAERRRW…GLRSFLRYLE (92 aa). The Tyr recombinase domain maps to 129-312; sequence SLPKALTDRE…DSARLLEIYD (184 aa). Catalysis depends on residues arginine 172, lysine 196, histidine 264, arginine 267, and histidine 290. Residue tyrosine 299 is the O-(3'-phospho-DNA)-tyrosine intermediate of the active site.

This sequence belongs to the 'phage' integrase family. XerC subfamily. As to quaternary structure, forms a cyclic heterotetrameric complex composed of two molecules of XerC and two molecules of XerD.

It localises to the cytoplasm. Its function is as follows. Site-specific tyrosine recombinase, which acts by catalyzing the cutting and rejoining of the recombining DNA molecules. The XerC-XerD complex is essential to convert dimers of the bacterial chromosome into monomers to permit their segregation at cell division. It also contributes to the segregational stability of plasmids. The polypeptide is Tyrosine recombinase XerC (Rhizobium meliloti (strain 1021) (Ensifer meliloti)).